The chain runs to 267 residues: Hydroxyethylthiazole kinase (267 aa).

Residue M46 coordinates substrate. ATP contacts are provided by R122 and S168. G195 is a binding site for substrate.

Belongs to the Thz kinase family. Mg(2+) serves as cofactor.

It catalyses the reaction 5-(2-hydroxyethyl)-4-methylthiazole + ATP = 4-methyl-5-(2-phosphooxyethyl)-thiazole + ADP + H(+). The protein operates within cofactor biosynthesis; thiamine diphosphate biosynthesis; 4-methyl-5-(2-phosphoethyl)-thiazole from 5-(2-hydroxyethyl)-4-methylthiazole: step 1/1. Functionally, catalyzes the phosphorylation of the hydroxyl group of 4-methyl-5-beta-hydroxyethylthiazole (THZ). The polypeptide is Hydroxyethylthiazole kinase (Nitratidesulfovibrio vulgaris (strain DSM 19637 / Miyazaki F) (Desulfovibrio vulgaris)).